Reading from the N-terminus, the 552-residue chain is Membrane protein insertase YidC (552 aa).

A run of 5 helical transmembrane segments spans residues 7 to 24 (VLWV…DNWQ), 364 to 384 (WGWA…PLSA), 434 to 454 (LPVV…LASV), 473 to 493 (PFFI…SLNP), and 508 to 528 (PIAF…YYVV).

The protein belongs to the OXA1/ALB3/YidC family. Type 1 subfamily. In terms of assembly, interacts with the Sec translocase complex via SecD. Specifically interacts with transmembrane segments of nascent integral membrane proteins during membrane integration.

Its subcellular location is the cell inner membrane. In terms of biological role, required for the insertion and/or proper folding and/or complex formation of integral membrane proteins into the membrane. Involved in integration of membrane proteins that insert both dependently and independently of the Sec translocase complex, as well as at least some lipoproteins. Aids folding of multispanning membrane proteins. The chain is Membrane protein insertase YidC from Burkholderia cenocepacia (strain ATCC BAA-245 / DSM 16553 / LMG 16656 / NCTC 13227 / J2315 / CF5610) (Burkholderia cepacia (strain J2315)).